Consider the following 79-residue polypeptide: Defensin-like protein 109 (79 aa).

Positions 1-24 (MDFTKKILVVFAFTIMLGISSVHC) are cleaved as a signal peptide. 4 cysteine pairs are disulfide-bonded: Cys41–Cys76, Cys47–Cys68, Cys54–Cys74, and Cys58–Cys75.

It belongs to the DEFL family.

The protein resides in the secreted. The sequence is that of Defensin-like protein 109 from Arabidopsis thaliana (Mouse-ear cress).